A 1748-amino-acid chain; its full sequence is Flagellar attachment zone protein 1 (1748 aa).

Coiled-coil stretches lie at residues 613–657 (REQE…KLQK), 684–864 (VTLD…HKVR), and 903–1663 (NDHM…SALE). Repeat copies occupy residues 1012 to 1025 (EELE…EKLA), 1026 to 1039 (EELE…EKLA), 1040 to 1053 (EELE…EKLA), 1054 to 1067 (EALD…EKLA), 1068 to 1081 (EELE…EKLA), 1082 to 1095 (EELE…EKLA), 1096 to 1109 (EELE…EKLA), 1110 to 1123 (EELE…EKLA), 1124 to 1137 (EELE…EKLA), 1138 to 1151 (EELE…EKLA), 1152 to 1165 (EALD…EKLA), 1166 to 1179 (EELD…EKLA), 1180 to 1193 (EELE…EKLA), 1194 to 1207 (EELE…EKLA), 1208 to 1221 (EELE…EKLA), 1222 to 1235 (EELE…EKLA), 1236 to 1249 (EELE…EKLA), 1250 to 1263 (EELE…EKLA), 1264 to 1277 (EELE…EKLA), 1278 to 1291 (EELE…EKLA), 1292 to 1305 (EELE…EKLA), 1306 to 1319 (EELE…EKLA), 1320 to 1333 (EELE…EKLA), 1334 to 1347 (EELE…EKLA), 1348 to 1361 (EELE…EKLA), 1362 to 1375 (EELE…EKLA), 1376 to 1389 (EELE…EKLA), 1390 to 1403 (EELE…EKLA), 1404 to 1417 (EELE…EKLA), 1418 to 1431 (EELE…EKLA), 1432 to 1445 (EELE…EKLA), 1446 to 1459 (EELE…EKLA), 1460 to 1473 (EELE…EKLA), 1474 to 1487 (EELE…EKLA), 1488 to 1501 (EELE…EKLA), 1502 to 1515 (EELE…EKLA), 1516 to 1529 (EELE…EKLA), 1530 to 1543 (EELE…EKLA), 1544 to 1557 (EELE…EKLA), 1558 to 1571 (EELE…EKLA), and 1572 to 1585 (EELE…KRLA). The 41 X 14 AA tandem repeats of E-E-L-E-L-K-[VA]-A-E-N-E-K-L-A stretch occupies residues 1012–1529 (EELELKAAEN…LKAAENEKLA (518 aa)).

Its subcellular location is the cell projection. The protein localises to the cilium. The protein resides in the flagellum. Functionally, a component of FAZ filament that is required for correct FAZ assembly and attachment. Not essential for new flagellum growth. The polypeptide is Flagellar attachment zone protein 1 (Trypanosoma brucei gambiense (strain MHOM/CI/86/DAL972)).